A 523-amino-acid chain; its full sequence is Katanin p60 ATPase-containing subunit A1 (523 aa).

Positions 82–215 (KEAPTGRRAA…DGKSKRGLYE (134 aa)) are disordered. Positions 178–194 (AGARSSTAGKKGAASKS) are enriched in low complexity. 279–286 (GPPGTGKT) lines the ATP pocket.

It belongs to the AAA ATPase family. Katanin p60 subunit A1 subfamily. May homooligomerize. Component of KTN80-KTN1 complexes composed of a hexamer of KTN1-KTN80 heterodimers that sense microtubule (MT) geometry to confer precise MT severing. Interacts directly with KTN80.1, KTN80.2, KTN80.3 and KTN80.4. Can interact with KTN80.1. May interact with the kinesin related protein KIN14A. Interacts with microtubule polymers. Binds to IPGA1. As to expression, expressed ubiquitously, including siliques, flowers, leaves, stems and roots.

It localises to the cytoplasm. Its subcellular location is the cytoskeleton. It catalyses the reaction n ATP + n H2O + a microtubule = n ADP + n phosphate + (n+1) alpha/beta tubulin heterodimers.. Functionally, severs microtubules in vitro in an ATP-dependent manner. Required for oligomerization of functional KTN80-KTN1 complexes that catalyze microtubule severing. This activity may promote rapid reorganization of cellular microtubule arrays. May be required for reorientation of cortical microtubule arrays during cellular elongation. Failure to correctly orient these arrays drastically compromises fiber length, cell wall thickness and mechanical strength. May also be required for the spatial organization of developmental cues within the root. Involved in the IPGA1- and AN-dependent regulation of pavement cells morphogenesis leading to puzzle shape. The polypeptide is Katanin p60 ATPase-containing subunit A1 (Arabidopsis thaliana (Mouse-ear cress)).